The following is a 135-amino-acid chain: Early E3 15.3 kDa protein (135 aa).

This sequence belongs to the adenoviridae E3_15 family.

Protects virus-infected cells from TNF-induced cytolysis. The sequence is that of Early E3 15.3 kDa protein from Human adenovirus B serotype 7 (HAdV-7).